The primary structure comprises 309 residues: Sulfate adenylyltransferase subunit 2 (309 aa).

Belongs to the PAPS reductase family. CysD subfamily. Heterodimer composed of CysD, the smaller subunit, and CysN.

The enzyme catalyses sulfate + ATP + H(+) = adenosine 5'-phosphosulfate + diphosphate. Its pathway is sulfur metabolism; hydrogen sulfide biosynthesis; sulfite from sulfate: step 1/3. Its function is as follows. With CysN forms the ATP sulfurylase (ATPS) that catalyzes the adenylation of sulfate producing adenosine 5'-phosphosulfate (APS) and diphosphate, the first enzymatic step in sulfur assimilation pathway. APS synthesis involves the formation of a high-energy phosphoric-sulfuric acid anhydride bond driven by GTP hydrolysis by CysN coupled to ATP hydrolysis by CysD. The chain is Sulfate adenylyltransferase subunit 2 from Mycobacterium bovis (strain ATCC BAA-935 / AF2122/97).